We begin with the raw amino-acid sequence, 429 residues long: 3-phosphoshikimate 1-carboxyvinyltransferase (429 aa).

Lys23, Ser24, and Arg28 together coordinate 3-phosphoshikimate. Lys23 contacts phosphoenolpyruvate. Phosphoenolpyruvate is bound by residues Gly95 and Arg123. The 3-phosphoshikimate site is built by Ser168, Gln170, Asp316, and Lys343. Gln170 is a binding site for phosphoenolpyruvate. The Proton acceptor role is filled by Asp316. 2 residues coordinate phosphoenolpyruvate: Arg347 and Arg389.

This sequence belongs to the EPSP synthase family. As to quaternary structure, monomer.

The protein localises to the cytoplasm. It carries out the reaction 3-phosphoshikimate + phosphoenolpyruvate = 5-O-(1-carboxyvinyl)-3-phosphoshikimate + phosphate. The protein operates within metabolic intermediate biosynthesis; chorismate biosynthesis; chorismate from D-erythrose 4-phosphate and phosphoenolpyruvate: step 6/7. In terms of biological role, catalyzes the transfer of the enolpyruvyl moiety of phosphoenolpyruvate (PEP) to the 5-hydroxyl of shikimate-3-phosphate (S3P) to produce enolpyruvyl shikimate-3-phosphate and inorganic phosphate. This Bacillus cereus (strain B4264) protein is 3-phosphoshikimate 1-carboxyvinyltransferase.